Reading from the N-terminus, the 529-residue chain is Putative amidohydrolase YtcJ (529 aa).

Belongs to the metallo-dependent hydrolases superfamily.

This Bacillus subtilis (strain 168) protein is Putative amidohydrolase YtcJ (ytcJ).